A 179-amino-acid chain; its full sequence is MSLKQRYRETIQPKLLKDLSLSNIHEVPKVLKITVNRGLGEAAQNAKSLEASITELATITGQKVVVTRAKKAIAGFKIRQGMPIGCAVTLRGERMYAFLERLINLALPRIRDFRGVSPKSFDGRGNYTLGVREQLIFPEISFDKIDAIRGMDITIVTSARTDEEGQSLLREMGMPFRSN.

The protein belongs to the universal ribosomal protein uL5 family. In terms of assembly, part of the 50S ribosomal subunit; part of the 5S rRNA/L5/L18/L25 subcomplex. Contacts the 5S rRNA and the P site tRNA. Forms a bridge to the 30S subunit in the 70S ribosome.

Functionally, this is one of the proteins that bind and probably mediate the attachment of the 5S RNA into the large ribosomal subunit, where it forms part of the central protuberance. In the 70S ribosome it contacts protein S13 of the 30S subunit (bridge B1b), connecting the 2 subunits; this bridge is implicated in subunit movement. Contacts the P site tRNA; the 5S rRNA and some of its associated proteins might help stabilize positioning of ribosome-bound tRNAs. This chain is Large ribosomal subunit protein uL5, found in Prochlorococcus marinus (strain MIT 9313).